Consider the following 325-residue polypeptide: MVKRQISMVLDLNKCIGCQTCTSACKLQWTNRNGREYMYWNNVETHPGPGYPRNYEHSGGGFDEEGALKIGITPSAEDYGIPWEYNYEEALMTGTDPWLRPNVKPTWGANWNEDEGRGEYPNSYYFYLPRICNHCANPGCLAACARNAIYKRQEDGIVLVDQERCRGYRYCITACPYKKVYFNEQISKAEKCIFCYPRIEKGLPTACAKQCVGRIRFIGYLDDEAGPVHLLVERYKVAIPLHPEWGTKPSVFYVPPLAPPRIGDDGEPTEETRVPLAYLKELFGEAVVPALETLKTERAKKQSGAESELMDTLIGYRHPEMFKLS.

4Fe-4S ferredoxin-type domains follow at residues 6-35 (ISMV…RNGR), 123-154 (SYYF…KRQE), and 156-185 (GIVL…FNEQ). Residues Cys-15, Cys-18, Cys-21, Cys-25, Cys-132, Cys-135, and Cys-140 each coordinate [4Fe-4S] cluster. [3Fe-4S] cluster is bound by residues Cys-144, Cys-165, and Cys-171. Positions 175, 192, 195, 207, and 211 each coordinate [4Fe-4S] cluster.

As to quaternary structure, heterotrimer of alpha, beta and gamma subunits. The cofactor is [3Fe-4S] cluster. It depends on [4Fe-4S] cluster as a cofactor.

It is found in the periplasm. Its function is as follows. Electron transfer subunit of the dehydrogenase during anaerobic growth on dimethyl sulfide. This Rhodovulum sulfidophilum (Rhodobacter sulfidophilus) protein is Dimethylsulfide dehydrogenase subunit beta (ddhB).